The chain runs to 1053 residues: Zinc finger and BTB domain-containing protein 11 (1053 aa).

The span at 141-156 (LDLESGEESNESEDDL) shows a compositional bias: acidic residues. The interval 141–173 (LDLESGEESNESEDDLSNFTSSPTTASKPAKKK) is disordered. Residues 157–168 (SNFTSSPTTASK) are compositionally biased toward low complexity. The BTB domain maps to 214–282 (CDVTLLIEGE…AYTSVLSFDF (69 aa)). Residues 546–566 (LVQRGKKMKQPKRDAKENTEE) are disordered. The segment covering 556–566 (PKRDAKENTEE) has biased composition (basic and acidic residues). 2 C2H2-type zinc fingers span residues 569 to 591 (HKCGECGMVFQRRYALIMHKLKH) and 597 to 619 (YKCPLCKKQFQYSASLRAHLIRH). Residues 619–643 (HTRKDAPSSSSSNSTSNEASGTSSE) form a disordered region. Residues 626–642 (SSSSSNSTSNEASGTSS) show a composition bias toward low complexity. C2H2-type zinc fingers lie at residues 651 to 673 (FICSICGRTLPKLYSLRIHMLKH), 679 to 701 (HACQVCGKTFIYKHGLKLHQSLH), 707 to 729 (FQCELCVKSFVTKRSLQEHMSIH), 735 to 757 (YLCSVCGKSFHRGSGLSKHFKKH), 766 to 788 (YHCTQCEKSFFEARDLRQHMNKH), 794 to 816 (FQCQFCDKCYSWKKDWYSHVKSH), 822 to 846 (YRCNICGKEFYEKALFRRHVKKATH), 858 to 880 (RVCEKCGRKFTQLREYRRHMNNH), 886 to 908 (FECLTCGVAWADARSLKRHVRTH), and 914 to 937 (YVCPVCSEAYIDARTLRKHMTKFH). Lysine 1043 is covalently cross-linked (Glycyl lysine isopeptide (Lys-Gly) (interchain with G-Cter in SUMO2)). Serine 1050 carries the post-translational modification Phosphoserine.

The protein resides in the nucleus. The protein localises to the nucleolus. In terms of biological role, may be involved in transcriptional regulation. In Homo sapiens (Human), this protein is Zinc finger and BTB domain-containing protein 11.